The sequence spans 130 residues: Small ribosomal subunit protein uS11 (130 aa).

The protein belongs to the universal ribosomal protein uS11 family. Part of the 30S ribosomal subunit. Interacts with proteins S7 and S18. Binds to IF-3.

Functionally, located on the platform of the 30S subunit, it bridges several disparate RNA helices of the 16S rRNA. Forms part of the Shine-Dalgarno cleft in the 70S ribosome. The polypeptide is Small ribosomal subunit protein uS11 (Shewanella violacea (strain JCM 10179 / CIP 106290 / LMG 19151 / DSS12)).